We begin with the raw amino-acid sequence, 387 residues long: EARP and GARP complex-interacting protein 1 (387 aa).

An N-acetylmethionine modification is found at methionine 1. 4 WD repeats span residues 132 to 172 (TAHS…SQAV), 180 to 222 (GGKG…QIYC), 226 to 266 (AHGQ…EPVK), and 270 to 310 (EHSH…SEPF). Residues 310-334 (FGHLVDDDDISDQEDHRSEEKSKEP) are disordered. A Phosphoserine modification is found at serine 320. A compositionally biased stretch (basic and acidic residues) spans 322–334 (QEDHRSEEKSKEP). The WD 5 repeat unit spans residues 345 to 385 (EHEDSVYAVDWSSADPWLFASLSYDGRLVINRVPRALKYHI).

It belongs to the WD repeat EIPR1 family. As to quaternary structure, interacts with two multisubunit tethering complexes: EARP composed of VPS50, VPS51, VPS52 and VPS53 subunits and GARP complex composed of VPS51, VPS52, VPS53 and VPS54 subunits. Interacts with SNAP29.

Its subcellular location is the golgi apparatus. The protein localises to the trans-Golgi network. Its function is as follows. Acts as a component of endosomal retrieval machinery that is involved in protein transport from early endosomes to either recycling endosomes or the trans-Golgi network. Mediates the recruitment of Golgi-associated retrograde protein (GARP) complex to the trans-Golgi network and controls early endosome-to-Golgi transport of internalized protein. Promotes the recycling of internalized transferrin receptor (TFRC) to the plasma membrane through interaction with endosome-associated recycling protein (EARP) complex. Controls proper insulin distribution and secretion, and retention of cargo in mature dense core vesicles. Required for the stability of the endosome-associated retrograde protein (EARP) complex subunits and for proper localization and association of EARP with membranes. The sequence is that of EARP and GARP complex-interacting protein 1 from Macaca fascicularis (Crab-eating macaque).